A 263-amino-acid chain; its full sequence is Endolytic peptidoglycan transglycosylase RlpA (263 aa).

Positions 1–16 are cleaved as a signal peptide; sequence MNRIYLYLLIVLILAG. Cys17 carries N-palmitoyl cysteine lipidation. Cys17 is lipidated: S-diacylglycerol cysteine. An SPOR domain is found at 182–257; sequence KNNALEYVIQ…AGYDSAFIKT (76 aa).

It belongs to the RlpA family.

The protein resides in the cell membrane. Lytic transglycosylase with a strong preference for naked glycan strands that lack stem peptides. The polypeptide is Endolytic peptidoglycan transglycosylase RlpA (Vibrio cholerae serotype O1 (strain ATCC 39315 / El Tor Inaba N16961)).